We begin with the raw amino-acid sequence, 289 residues long: MSTYLIGDIHGCLDELLALLAQVNFDPQQDTLWLTGDLVARGPASLDVLRYVRSLGPAVRMVLGNHDLHLLAVYAGISRNKPKDRITPLLDAPDADELINWLRRQPVLQVDDQLKLIMAHAGITPQWDIETAKMCAREVEAVLSSDSYPLFLDAMYGDMPNNWSPELTGLARLRFSTNALTRMRFCFPNGQLDMICKDTPENAPAPLKPWFDLPRLVDPEYSIIFGHWASLEGKGVPEGIYGLDTGCCWGGDLTLLRWEDKRYFTQRAFKAEAEINNNNGFAAGKEVQH.

The protein belongs to the Ap4A hydrolase family.

It carries out the reaction P(1),P(4)-bis(5'-adenosyl) tetraphosphate + H2O = 2 ADP + 2 H(+). Hydrolyzes diadenosine 5',5'''-P1,P4-tetraphosphate to yield ADP. The chain is Bis(5'-nucleosyl)-tetraphosphatase, symmetrical from Yersinia pseudotuberculosis serotype O:1b (strain IP 31758).